Consider the following 694-residue polypeptide: Polyribonucleotide nucleotidyltransferase (694 aa).

The Mg(2+) site is built by Asp-486 and Asp-492. The 60-residue stretch at 553 to 612 (PRIETMQIKPTKIASVIGPGGKQIRQIIEETGVQIDVNDLGVVSISASSASAINKAKEII) folds into the KH domain. Residues 622 to 690 (GKTYRGRVTS…EKGQLKLSHK (69 aa)) enclose the S1 motif domain.

It belongs to the polyribonucleotide nucleotidyltransferase family. Requires Mg(2+) as cofactor.

The protein resides in the cytoplasm. The catalysed reaction is RNA(n+1) + phosphate = RNA(n) + a ribonucleoside 5'-diphosphate. In terms of biological role, involved in mRNA degradation. Catalyzes the phosphorolysis of single-stranded polyribonucleotides processively in the 3'- to 5'-direction. In Chlamydia pneumoniae (Chlamydophila pneumoniae), this protein is Polyribonucleotide nucleotidyltransferase.